Reading from the N-terminus, the 318-residue chain is 2-keto-3-deoxygluconate permease (318 aa).

10 consecutive transmembrane segments (helical) span residues 10 to 30 (LPGGMMLVPLLLGAVCHTLWP), 42 to 62 (GLISGTVPILAVWFFCMGATI), 82 to 102 (IAMAWLVAVLCAPLLPIGGVP), 109 to 129 (LSVLALVAAMDMTNGGLYAAL), 139 to 159 (AGAVVLMSLESGPLISMLILG), 163 to 183 (LASFDPLLFVGAVLPLLLGFA), 194 to 214 (FFAQATTTLVPFFGFALGNTL), 224 to 244 (ASGVLLGVAVIVITGLPLLLA), 257 to 277 (VAASSTAGAAVATPALIAGMA), and 289 to 309 (ALVASAVIVTSLLVPLLTALY).

The protein belongs to the KdgT transporter family.

It is found in the cell inner membrane. The catalysed reaction is 2-dehydro-3-deoxy-D-gluconate(in) + H(+)(in) = 2-dehydro-3-deoxy-D-gluconate(out) + H(+)(out). Its function is as follows. Catalyzes the proton-dependent uptake of 2-keto-3-deoxygluconate (KDG) into the cell. In Xanthomonas euvesicatoria pv. vesicatoria (strain 85-10) (Xanthomonas campestris pv. vesicatoria), this protein is 2-keto-3-deoxygluconate permease.